The following is a 382-amino-acid chain: Neuropeptide Y receptor type 1 (382 aa).

Residues 1–33 (MNSTSFSQVENHSIFCNFSENSQFLAFESDDCH) lie on the Extracellular side of the membrane. 3 N-linked (GlcNAc...) asparagine glycosylation sites follow: asparagine 2, asparagine 11, and asparagine 17. Residues 34-54 (LPLAMIFTLALAYGAVIILGV) form a helical membrane-spanning segment. The Cytoplasmic portion of the chain corresponds to 55-75 (TGNLALIMIILKQKEMRNVTN). A helical membrane pass occupies residues 76–96 (ILIVNLSFSDLLVAIMCLPFT). Over 97 to 115 (FVYTLMDHWVFGEAMCKLN) the chain is Extracellular. Cysteine 112 and cysteine 197 are joined by a disulfide. A helical transmembrane segment spans residues 116–136 (PFVQCVSITVSIFSLVLIAVE). Over 137 to 153 (RHQLIINPRGWRPNNRH) the chain is Cytoplasmic. Residues 154–174 (AYVGIAVIWVLAVVSSLPFLI) form a helical membrane-spanning segment. Topologically, residues 175–210 (YQVLTDEPFQNVTLDAFKDKYVCFDKFPSDSHRLSY) are extracellular. Asparagine 185 carries N-linked (GlcNAc...) asparagine glycosylation. A helical transmembrane segment spans residues 211–231 (TTLLLMLQYFGPLCFIFICYF). Residues 232–259 (KIYIRLKRRNNMMDKMRDNKYRSSETKR) are Cytoplasmic-facing. Residues 260–280 (INIMLLSIVVAFAVCWLPLTI) form a helical membrane-spanning segment. The Extracellular portion of the chain corresponds to 281–298 (FNTVFDWNHQIIATCNHN). The helical transmembrane segment at 299–319 (LLFLLCHLTAMISTCVNPIFY) threads the bilayer. Topologically, residues 320 to 382 (GFLNKNFQRD…KINNDDNEKI (63 aa)) are cytoplasmic. Cysteine 337 carries S-palmitoyl cysteine lipidation. A Phosphoserine modification is found at serine 367.

This sequence belongs to the G-protein coupled receptor 1 family.

It localises to the cell membrane. In terms of biological role, receptor for neuropeptide Y and peptide YY. The polypeptide is Neuropeptide Y receptor type 1 (NPY1R) (Canis lupus familiaris (Dog)).